We begin with the raw amino-acid sequence, 117 residues long: Large ribosomal subunit protein eL34 (117 aa).

Phosphoserine is present on S12. Residues K36 and K43 each carry the N6-acetyllysine modification. A Glycyl lysine isopeptide (Lys-Gly) (interchain with G-Cter in SUMO2) cross-link involves residue K108.

It belongs to the eukaryotic ribosomal protein eL34 family. Component of the large ribosomal subunit.

It is found in the cytoplasm. The protein resides in the cytosol. It localises to the endoplasmic reticulum. In terms of biological role, component of the large ribosomal subunit. The ribosome is a large ribonucleoprotein complex responsible for the synthesis of proteins in the cell. The chain is Large ribosomal subunit protein eL34 (Rpl34) from Mus musculus (Mouse).